A 145-amino-acid chain; its full sequence is Large ribosomal subunit protein uL14m (145 aa).

Residues 1–30 (MAFFTGLWGPFTCVSRVLSHHCFSTTGSLS) constitute a mitochondrion transit peptide.

This sequence belongs to the universal ribosomal protein uL14 family. Component of the mitochondrial large ribosomal subunit (mt-LSU). Mature mammalian 55S mitochondrial ribosomes consist of a small (28S) and a large (39S) subunit. The 28S small subunit contains a 12S ribosomal RNA (12S mt-rRNA) and 30 different proteins. The 39S large subunit contains a 16S rRNA (16S mt-rRNA), a copy of mitochondrial valine transfer RNA (mt-tRNA(Val)), which plays an integral structural role, and 52 different proteins. Interacts with MALSU1.

It is found in the mitochondrion. Functionally, forms part of 2 intersubunit bridges in the assembled ribosome. Upon binding to MALSU1 intersubunit bridge formation is blocked, preventing ribosome formation and repressing translation. This Homo sapiens (Human) protein is Large ribosomal subunit protein uL14m (MRPL14).